Reading from the N-terminus, the 282-residue chain is Bicarbonate transport ATP-binding protein CmpD (282 aa).

The ABC transporter domain occupies 24-257 (LTIENVSKVY…RPRDRDRIME (234 aa)). 60–67 (GHSGCGKS) serves as a coordination point for ATP.

The protein belongs to the ABC transporter superfamily. Nitrate/nitrite/cyanate uptake transporter (NitT) (TC 3.A.1.16) family. In terms of assembly, the complex is composed of two ATP-binding proteins (CmpC and CmpD), a transmembrane protein (CmpB) and a solute-binding protein (CmpA).

The protein resides in the cell inner membrane. Its function is as follows. Part of the ABC transporter complex CmpABCD involved in bicarbonate transport. Responsible for energy coupling to the transport system. This Synechocystis sp. (strain ATCC 27184 / PCC 6803 / Kazusa) protein is Bicarbonate transport ATP-binding protein CmpD (cmpD).